Here is a 122-residue protein sequence, read N- to C-terminus: Cytochrome c3 hydrogenase large chain (122 aa).

The cofactor is Fe cation.

The enzyme catalyses 2 Fe(III)-[cytochrome c3] + H2 = 2 Fe(II)-[cytochrome c3] + 2 H(+). In Acidithiobacillus ferrooxidans (Thiobacillus ferrooxidans), this protein is Cytochrome c3 hydrogenase large chain (hoxG).